Reading from the N-terminus, the 753-residue chain is MKTSQFLSLLLLAGIAQAIVPPREPRPPTGGGNKLLTYKECVPRATISPRSTSLAWINSDEDGQYISQSDDGALILQNIVTNTNKTLVAADKVPKGYYDYWFKPDLSAVLWATNYTKQYRHSYFANYFILDIEKGSLTPLAQDQAGDIQYAQWSPMDNSIAYVRGNDLYIWNNGKTKRITENGGPDIFNGVPDWVYEEEIFGDRFALWFSPDGEYLAYLRFNETGVPTYTIPYYKNKQKIAPAYPRELEIRYPKVSAKNPTVQFHLLNIASSQETTIPVTAFPENDLVIGEVAWLSSGHDSVAYRAFNRVQDREKIVSVKVESKESKVIRERDGTDGWIDNLLSMSYIGDVNGKEYYVDISDASGWAHIYLYPVDGGKEIALTTGEWEVVAILKVDTMKKLIYFTSTKYHSTTRHVYSVSYDTKVMTPLVNDKEAAYYTASFSAKGGYYILSYQGPNVPYQELYSTKDSKKPLKTITSNDALLEKLKEYKLPKVSFFEIKLPSGETLNVKQRLPPNFNPHKKYPVLFTPYGGPGAQEVSQAWNSLDFKSYITSDPELEYVTWTVDNRGTGYKGRKFRSAVAKRLGFLEPQDQVFAAKELLKNRWADKDHIGIWGWSYGGFLTAKTLETDSGVFTFGISTAPVSDFRLYDSMYTERYMKTVELNADGCDDNVHFQNAAVLSNTLMNGGVTADKLTTQWFTDSDHGIRYDMDSTYQYKQLAKMVYDQKQRRPERPPMHQWSKRVLAALFGERAEE.

The signal sequence occupies residues 1 to 18 (MKTSQFLSLLLLAGIAQA). 3 N-linked (GlcNAc...) asparagine glycosylation sites follow: Asn-84, Asn-114, and Asn-222. Catalysis depends on charge relay system residues Ser-616, Asp-668, and His-703.

The protein belongs to the peptidase S9B family.

It localises to the secreted. It carries out the reaction Release of an N-terminal dipeptide, Xaa-Yaa-|-Zaa-, from a polypeptide, preferentially when Yaa is Pro, provided Zaa is neither Pro nor hydroxyproline.. Extracellular dipeptidyl-peptidase which removes N-terminal dipeptides sequentially from polypeptides having unsubstituted N-termini provided that the penultimate residue is proline. Contributes to pathogenicity. This chain is Probable dipeptidyl peptidase 4 (DPP4), found in Trichophyton verrucosum (strain HKI 0517).